Reading from the N-terminus, the 45-residue chain is Movement protein P3a (45 aa).

Residues phenylalanine 9–leucine 29 traverse the membrane as a helical segment.

It belongs to the polerovirus movement protein P3a family. As to quaternary structure, homodimer. Heterodimer with movement protein P17.

Its subcellular location is the host cell junction. The protein localises to the host plasmodesma. The protein resides in the host Golgi apparatus. It is found in the host chloroplast envelope. It localises to the host mitochondrion outer membrane. Its function is as follows. Together with movement protein P17, plays an essential role in virus long distance movement. The protein is Movement protein P3a (ORF3a) of Solanum tuberosum (Potato).